We begin with the raw amino-acid sequence, 370 residues long: Aminomethyltransferase (370 aa).

Belongs to the GcvT family. In terms of assembly, the glycine cleavage system is composed of four proteins: P, T, L and H.

It carries out the reaction N(6)-[(R)-S(8)-aminomethyldihydrolipoyl]-L-lysyl-[protein] + (6S)-5,6,7,8-tetrahydrofolate = N(6)-[(R)-dihydrolipoyl]-L-lysyl-[protein] + (6R)-5,10-methylene-5,6,7,8-tetrahydrofolate + NH4(+). In terms of biological role, the glycine cleavage system catalyzes the degradation of glycine. This is Aminomethyltransferase from Stenotrophomonas maltophilia (strain R551-3).